The sequence spans 69 residues: Protein hunchback (69 aa).

C2H2-type zinc fingers lie at residues 1 to 11 (KHHLEYHLRNH), 17 to 39 (FKCEKCSYSCVNKSMLNSHLKSH), and 45 to 69 (YRCANCTYATKYCHSLKLHLRKYSH).

This sequence belongs to the hunchback C2H2-type zinc-finger protein family.

It is found in the nucleus. Its function is as follows. Gap class segmentation protein that controls development of head structures. The chain is Protein hunchback (hb) from Apis mellifera (Honeybee).